The chain runs to 144 residues: Large ribosomal subunit protein uL15 (144 aa).

The span at 1-16 shows a compositional bias: basic residues; that stretch reads MVVRKEKKSRKYRGYR. The interval 1–35 is disordered; that stretch reads MVVRKEKKSRKYRGYRTHGWGTKGQHRDRGAQGGR.

This sequence belongs to the universal ribosomal protein uL15 family. As to quaternary structure, part of the 50S ribosomal subunit.

Binds to the 23S rRNA. This is Large ribosomal subunit protein uL15 from Sulfolobus acidocaldarius (strain ATCC 33909 / DSM 639 / JCM 8929 / NBRC 15157 / NCIMB 11770).